Here is a 162-residue protein sequence, read N- to C-terminus: 2-C-methyl-D-erythritol 2,4-cyclodiphosphate synthase (162 aa).

2 residues coordinate a divalent metal cation: Asp12 and His14. 4-CDP-2-C-methyl-D-erythritol 2-phosphate contacts are provided by residues 12–14 (DVH) and 38–39 (HS). His46 contributes to the a divalent metal cation binding site. 4-CDP-2-C-methyl-D-erythritol 2-phosphate contacts are provided by residues 60-62 (DIG), 65-69 (FPDTD), and Arg146.

It belongs to the IspF family. In terms of assembly, homotrimer. A divalent metal cation serves as cofactor.

It carries out the reaction 4-CDP-2-C-methyl-D-erythritol 2-phosphate = 2-C-methyl-D-erythritol 2,4-cyclic diphosphate + CMP. It functions in the pathway isoprenoid biosynthesis; isopentenyl diphosphate biosynthesis via DXP pathway; isopentenyl diphosphate from 1-deoxy-D-xylulose 5-phosphate: step 4/6. Involved in the biosynthesis of isopentenyl diphosphate (IPP) and dimethylallyl diphosphate (DMAPP), two major building blocks of isoprenoid compounds. Catalyzes the conversion of 4-diphosphocytidyl-2-C-methyl-D-erythritol 2-phosphate (CDP-ME2P) to 2-C-methyl-D-erythritol 2,4-cyclodiphosphate (ME-CPP) with a corresponding release of cytidine 5-monophosphate (CMP). This chain is 2-C-methyl-D-erythritol 2,4-cyclodiphosphate synthase, found in Bordetella bronchiseptica (strain ATCC BAA-588 / NCTC 13252 / RB50) (Alcaligenes bronchisepticus).